The primary structure comprises 820 residues: MSDTRRRVKVYTLNEDRQWDDRGTGHVSSTYVDRLKGMSLLVRAESDGSLLLESKINPNTAYQKQQDTLIVWSEAENYDLALSFQEKAGCDEIWEKICQVQGKDPSVDVTQDPIDESEEERFEEMPETSNLIDLPTCELGKLEEIADLVTSVLSSPIRREKLALVLENEGYIKKLLQLFQTCENLDNTEGLHHLYEIIRGILFLNKAALFEVMFSDECIMDVVGCLEYDPALAQPKRHREFLTKTAKFKEVIPITDSELRQKIHQTYRVQYIQDVILPTPSVFEENFLSTLTSFIFFNKVEIVSMLQEDEKFLSEVFAQLTDEATDDDKRRELVNFFKEFCAFSQTLQPQNRDAFFKTLANLGILPALEIVMGMDDLQVRAAATDIFSYLVEFSPSMVREFVMQEAQQSDDDILLINVVIEQMICDSDPELGGAVQLMGLLRTLIDPENMLATANKTEKSEFLNFFYNHCMHVLTAPLLANTAEDKLEKDAVLGSIKTSTVCPDNFQTAQLLALILELLTFCVEHHTYHIKNYIMNKDLLRRVLILMNSKHTFLALCALRFMRRIIGLKDEFYNRYIIKGNLFEPVIHALLDNGTRYNLLNSAIIELFEFIRVEDIKSLTSHIVENFYKALESIEYVQTFKGLKTRYEQEKDRQSQKLSSVPSILRSNRFRRDARALEDDEELWFNEDDEEEGEAVVPPVEKTKPEDDFPEGYEKFLETKKAKELEDKENLPKRTSVGGFKFTFSHSVSAANGANSTNSKSVAAHTPPATSNGSSSKNTSLTTTVASTKGSLIGLVDYPDDEDEEEEEDTSPRKRPRLGS.

The 100-residue stretch at 1–100 (MSDTRRRVKV…DEIWEKICQV (100 aa)) folds into the WH1 domain. The segment covering 682–694 (ELWFNEDDEEEGE) has biased composition (acidic residues). 2 disordered regions span residues 682–711 (ELWFNEDDEEEGEAVVPPVEKTKPEDDFPE) and 750–820 (AANG…RLGS). The span at 701–711 (EKTKPEDDFPE) shows a compositional bias: basic and acidic residues. Composition is skewed to polar residues over residues 750-761 (AANGANSTNSKS) and 768-790 (PATSNGSSSKNTSLTTTVASTKG). Over residues 798-809 (YPDDEDEEEEED) the composition is skewed to acidic residues.

This sequence belongs to the SMEK family. Serine/threonine-protein phosphatase 4 (PP4) occurs in different assemblies of the catalytic and one or more regulatory subunits.

Regulatory subunit of serine/threonine-protein phosphatase 4 (PP4). This is Serine/threonine-protein phosphatase 4 regulatory subunit 3-B from Xenopus laevis (African clawed frog).